Consider the following 616-residue polypeptide: MKKQFDTEVNDLLYLIIHSLYSHKEIFLRELISNASDAIDKLKFLSLTNEKFKNIALEPKIEITFDDKSILIKDNGIGMNEQELTNHLGVIAKSGTKEFINNLKQDEKKSANLIGQFGVGFYSAFIVSEKVEVTSKKALESDAYIWSSDGKTGYEIEKAKKEDPGTEIKLYLNKEGLEYANKWKIQEIVKKYSNHINYPIYIKYNEPIMKDGKQEGIEEKEEKLNETTALWTKNKSEIKTEEYNEFYKNTTFDYENPLMYIHTKAEGNLEYTNLFYIPSKAPYDLYYPNTKPGVKLFINRIFITDSEGSLLPNYLRFIKGIIDCQDLPLNVSREILQQNKILSKIKSSSVKKILSELEKLSKKNPEKFSEFSKEFGRCIKEGVYSDFENREKLISLIRFKSSSVDGFVSFKEYKERMNEGQKSIYYITGGKENILKENPIVTAYKEKGFEILIMDDELDEAILNLIPEYEGLKLKAINKNETSNELKDENFKKIEEEFKDTLTRVKEILKDQIKEVNLSATLIKEPSAIIVDSNDPTYQMQKIMLSMGQEVKEIKPILELNPNNKIVQNLKNLEPEKLEKISILLFEEALLTSGMPSKNPRKFINIINEFLEKDLL.

The interval 1–333 (MKKQFDTEVN…CQDLPLNVSR (333 aa)) is a; substrate-binding. The interval 334–542 (EILQQNKILS…SNDPTYQMQK (209 aa)) is b. The tract at residues 543-616 (IMLSMGQEVK…INEFLEKDLL (74 aa)) is c.

This sequence belongs to the heat shock protein 90 family. In terms of assembly, homodimer.

Its subcellular location is the cytoplasm. Molecular chaperone. Has ATPase activity. The protein is Chaperone protein HtpG of Borreliella afzelii (strain PKo) (Borrelia afzelii).